The sequence spans 489 residues: Inactive receptor-like serine/threonine-protein kinase At2g40270 (489 aa).

A signal peptide spans methionine 1–serine 23. Residues leucine 24–leucine 139 lie on the Extracellular side of the membrane. Positions lysine 67–proline 130 are disordered. The span at alanine 81–proline 90 shows a compositional bias: low complexity. Positions threonine 99–valine 116 are enriched in polar residues. Low complexity predominate over residues serine 117 to proline 130. The helical transmembrane segment at valine 140–phenylalanine 160 threads the bilayer. Over threonine 161–alanine 489 the chain is Cytoplasmic. Residues glutamate 200–leucine 460 enclose the Protein kinase domain.

Belongs to the protein kinase superfamily. Ser/Thr protein kinase family.

Its subcellular location is the cell membrane. This is Inactive receptor-like serine/threonine-protein kinase At2g40270 from Arabidopsis thaliana (Mouse-ear cress).